A 170-amino-acid polypeptide reads, in one-letter code: J domain-containing protein (170 aa).

Residues 17–82 (DYYALLGCDE…SKRALYDKWR (66 aa)) enclose the J domain. Positions 101 to 170 (QQSMHWSKPN…VLSKFRNYEI (70 aa)) are disordered. Over residues 110–120 (NTKDRMLEGDG) the composition is skewed to basic and acidic residues. A compositionally biased stretch (low complexity) spans 121–134 (SKPSGPSSLGPSNP).

In Bombyx mori (Silk moth), this protein is J domain-containing protein (jdp).